Consider the following 293-residue polypeptide: tRNA-cytidine(32) 2-sulfurtransferase (293 aa).

A PP-loop motif motif is present at residues 62-67 (SGGKDS). C137, C140, and C228 together coordinate [4Fe-4S] cluster.

It belongs to the TtcA family. In terms of assembly, homodimer. It depends on Mg(2+) as a cofactor. [4Fe-4S] cluster serves as cofactor.

It is found in the cytoplasm. It catalyses the reaction cytidine(32) in tRNA + S-sulfanyl-L-cysteinyl-[cysteine desulfurase] + AH2 + ATP = 2-thiocytidine(32) in tRNA + L-cysteinyl-[cysteine desulfurase] + A + AMP + diphosphate + H(+). It functions in the pathway tRNA modification. In terms of biological role, catalyzes the ATP-dependent 2-thiolation of cytidine in position 32 of tRNA, to form 2-thiocytidine (s(2)C32). The sulfur atoms are provided by the cysteine/cysteine desulfurase (IscS) system. This chain is tRNA-cytidine(32) 2-sulfurtransferase, found in Brucella melitensis biotype 1 (strain ATCC 23456 / CCUG 17765 / NCTC 10094 / 16M).